Consider the following 239-residue polypeptide: Ribonuclease PH (239 aa).

Phosphate contacts are provided by residues R86 and G124 to R126.

Belongs to the RNase PH family. Homohexameric ring arranged as a trimer of dimers.

The catalysed reaction is tRNA(n+1) + phosphate = tRNA(n) + a ribonucleoside 5'-diphosphate. Its function is as follows. Phosphorolytic 3'-5' exoribonuclease that plays an important role in tRNA 3'-end maturation. Removes nucleotide residues following the 3'-CCA terminus of tRNAs; can also add nucleotides to the ends of RNA molecules by using nucleoside diphosphates as substrates, but this may not be physiologically important. Probably plays a role in initiation of 16S rRNA degradation (leading to ribosome degradation) during starvation. The polypeptide is Ribonuclease PH (Psychromonas ingrahamii (strain DSM 17664 / CCUG 51855 / 37)).